A 336-amino-acid polypeptide reads, in one-letter code: Dihydroorotate dehydrogenase (quinone) (336 aa).

FMN is bound by residues 62-66 (AGLDK) and Thr86. Lys66 is a substrate binding site. Residue 111 to 115 (NRMGF) coordinates substrate. FMN contacts are provided by Asn139 and Asn172. Asn172 contacts substrate. The active-site Nucleophile is the Ser175. Asn177 is a binding site for substrate. Residues Lys217 and Thr245 each coordinate FMN. 246 to 247 (NT) serves as a coordination point for substrate. FMN is bound by residues Gly268, Gly297, and 318–319 (YS).

The protein belongs to the dihydroorotate dehydrogenase family. Type 2 subfamily. As to quaternary structure, monomer. Requires FMN as cofactor.

The protein resides in the cell membrane. It carries out the reaction (S)-dihydroorotate + a quinone = orotate + a quinol. It participates in pyrimidine metabolism; UMP biosynthesis via de novo pathway; orotate from (S)-dihydroorotate (quinone route): step 1/1. Catalyzes the conversion of dihydroorotate to orotate with quinone as electron acceptor. The polypeptide is Dihydroorotate dehydrogenase (quinone) (Aeromonas salmonicida (strain A449)).